The primary structure comprises 427 residues: A-kinase anchor protein 5 (427 aa).

Residues 1–122 are disordered; it reads METTISEIHV…DADLSKKKAK (122 aa). Residues 1–170 are essential to the intracellular anchoring function; the sequence is METTISEIHV…LDIQTQTPLN (170 aa). Over residues 8–19 the composition is skewed to basic and acidic residues; sequence IHVENKDEKRSA. Ser22 carries the phosphoserine modification. Cys36 carries the S-palmitoyl cysteine lipid modification. Basic residues predominate over residues 37–48; it reads FKRRKKAAKALK. Positions 76 to 96 match the AKAP CaM-binding motif; it reads RGAWASLKRLVTRRKRSESSK. The segment covering 92-102 has biased composition (basic and acidic residues); it reads SESSKQQKPLE. Cys129 is lipidated: S-palmitoyl cysteine. Polar residues-rich tracts occupy residues 171-182 and 242-252; these read DQATKAKSTQDL and VQPQQASPLET. Disordered regions lie at residues 171-205, 239-269, and 281-333; these read DQAT…STTS, KQDV…PPLP, and SNST…EESK. Residues 302–333 are compositionally biased toward basic and acidic residues; it reads EETKPKDTELSQESDFKENGITEEKSKSEESK. The PKA-RII subunit binding domain stretch occupies residues 392-405; that stretch reads LIETASSLVKNAIQ. The tract at residues 410–427 is tethers NFATC2 to CRAC channels; that stretch reads QLVNEMASDDNKINNLLQ.

In terms of assembly, binding protein for dimer of the RII-beta regulatory subunit of cAMP-dependent protein kinase (PKA) and also for the protein kinase C (PKC) and the phosphatase calcineurin (PP2B). Each enzyme is inhibited when bound to the anchoring protein. Also binds the beta2-adrenergic receptor. Part of a complex containing AKAP5, ADCY5, ADCY6 and PDE4C. Interacts with ADCY8, and enhances its phosphorylation at lipid rafts. Interacts with ORAI1 (isoform alpha) (via N-terminus) upon store depletion and in response to LTC4. Does not interact with ORAI2 and ORAI3 paralogs. Interacts (via leucine zipper domain) with NFATC2/NFAT1. Interacts with calmodulin; the interaction is calcium-independent. Interacts with KCNQ2; the interaction may help KCNQ2 channel complex to retain calcium-bound calmodulin. Interacts with KCNK2; the channel is recruited to postsynaptic microdomains by AKAP5 where it can integrate neurotransmitter receptor signals. Part of a complex composed of AKAP5 and ADRB2. Palmitoylated. Palmitoylation at Cys-36 and Cys-129 play a key role in the targeting of AKAP5 to lipid rafts. Palmitoylation by ZDHHC2 is required for AKAP5 function in LTP-stimulated recycling endosome exocytosis. Predominantly in the cerebral cortex and the postsynaptic densities of the forebrain, and to a lesser extent in adrenal medulla, lung and anterior pituitary.

The protein localises to the postsynaptic recycling endosome membrane. Its subcellular location is the cell projection. It localises to the dendrite. The protein resides in the postsynaptic cell membrane. Multivalent scaffold protein that anchors the cAMP-dependent protein kinase/PKA to cytoskeletal and/or organelle-associated proteins, targeting the signal carried by cAMP to specific intracellular effectors. Association with the beta2-adrenergic receptor (beta2-AR) not only regulates beta2-AR signaling pathway, but also the activation by PKA by switching off the beta2-AR signaling cascade. Plays a role in long term synaptic potentiation by regulating protein trafficking from the dendritic recycling endosomes to the plasma membrane and controlling both structural and functional plasticity at excitatory synapses. In hippocampal pyramidal neurons, recruits KCNK2/TREK-1 channel at postsynaptic dense bodies microdomains and converts it to a leak channel no longer sensitive to stimulation by arachidonic acid, acidic pH or mechanical stress, nor inhibited by Gq-coupled receptors but still under the negative control of Gs-coupled receptors. Associates with ORAI1 pore-forming subunit of CRAC channels in Ca(2+) signaling microdomains where it recruits NFATC2/NFAT1 and couples store-operated Ca(2+) influx to calmodulin and calcineurin signaling and activation of NFAT-dependent transcriptional responses. The sequence is that of A-kinase anchor protein 5 (AKAP5) from Homo sapiens (Human).